We begin with the raw amino-acid sequence, 427 residues long: Enolase 1 (427 aa).

Glutamine 162 is a (2R)-2-phosphoglycerate binding site. Glutamate 204 serves as the catalytic Proton donor. 3 residues coordinate Mg(2+): aspartate 241, glutamate 285, and aspartate 312. The (2R)-2-phosphoglycerate site is built by lysine 337, arginine 366, serine 367, and lysine 388. The active-site Proton acceptor is lysine 337.

The protein belongs to the enolase family. Requires Mg(2+) as cofactor.

The protein resides in the cytoplasm. It is found in the secreted. The protein localises to the cell surface. The catalysed reaction is (2R)-2-phosphoglycerate = phosphoenolpyruvate + H2O. The protein operates within carbohydrate degradation; glycolysis; pyruvate from D-glyceraldehyde 3-phosphate: step 4/5. Its function is as follows. Catalyzes the reversible conversion of 2-phosphoglycerate (2-PG) into phosphoenolpyruvate (PEP). It is essential for the degradation of carbohydrates via glycolysis. This chain is Enolase 1, found in Chlorobaculum tepidum (strain ATCC 49652 / DSM 12025 / NBRC 103806 / TLS) (Chlorobium tepidum).